Here is a 1275-residue protein sequence, read N- to C-terminus: Surfactin synthase subunit 3 (1275 aa).

Residues 968–1043 enclose the Carrier domain; that stretch reads GPRNEMEETI…GISAYLKNGG (76 aa). Ser-1003 is subject to O-(pantetheine 4'-phosphoryl)serine. A thioesterase region spans residues 1059-1271; it reads QIIFAFPPVL…ILLEFLNTQT (213 aa). Residues Ser-1120, Asp-1147, and His-1247 contribute to the active site.

Belongs to the ATP-dependent AMP-binding enzyme family. Requires pantetheine 4'-phosphate as cofactor.

The protein operates within antibiotic biosynthesis; surfactin biosynthesis. Its function is as follows. Probably activates a leucine. The protein is Surfactin synthase subunit 3 (srfAC) of Bacillus subtilis (strain 168).